The primary structure comprises 120 residues: Large ribosomal subunit protein uL18 (120 aa).

This sequence belongs to the universal ribosomal protein uL18 family. As to quaternary structure, part of the 50S ribosomal subunit; part of the 5S rRNA/L5/L18/L25 subcomplex. Contacts the 5S and 23S rRNAs.

Functionally, this is one of the proteins that bind and probably mediate the attachment of the 5S RNA into the large ribosomal subunit, where it forms part of the central protuberance. This Sinorhizobium medicae (strain WSM419) (Ensifer medicae) protein is Large ribosomal subunit protein uL18.